Reading from the N-terminus, the 275-residue chain is Reticulon-like protein B1 (275 aa).

2 stretches are compositionally biased toward basic and acidic residues: residues 1–10 and 20–38; these read MAEEHKHDES and VVER…HHGG. Residues 1–68 are disordered; the sequence is MAEEHKHDES…PSSPSSSMKS (68 aa). Residue Ala2 is modified to N-acetylalanine. Residues 59 to 68 are compositionally biased toward low complexity; that stretch reads PSSPSSSMKS. Residues 89–274 form the Reticulon domain; it reads PADIFMWKNK…PLGPLKNKKK (186 aa). The next 3 helical transmembrane spans lie at 99–119, 120–140, and 194–214; these read KMSG…ELME, YHLL…LFLW, and FLIA…FNFL.

Interacts with VirB2. As to expression, predominantly expressed in root tissues.

The protein localises to the endoplasmic reticulum membrane. It is found in the cell membrane. In terms of biological role, plays a role in the Agrobacterium-mediated plant transformation via its interaction with VirB2, the major component of the T-pilus. The chain is Reticulon-like protein B1 (RTNLB1) from Arabidopsis thaliana (Mouse-ear cress).